We begin with the raw amino-acid sequence, 396 residues long: Methylthioribose kinase (396 aa).

ATP is bound by residues Asn44, Lys61, and 115 to 117 (EDL). Position 233 (Asp233) interacts with substrate. 250–252 (DPE) contacts ATP. Residue Arg340 coordinates substrate.

It belongs to the methylthioribose kinase family. As to quaternary structure, homodimer.

The catalysed reaction is 5-(methylsulfanyl)-D-ribose + ATP = 5-(methylsulfanyl)-alpha-D-ribose 1-phosphate + ADP + H(+). It functions in the pathway amino-acid biosynthesis; L-methionine biosynthesis via salvage pathway; S-methyl-5-thio-alpha-D-ribose 1-phosphate from S-methyl-5'-thioadenosine (hydrolase route): step 2/2. In terms of biological role, catalyzes the phosphorylation of methylthioribose into methylthioribose-1-phosphate. The chain is Methylthioribose kinase from Geobacillus kaustophilus (strain HTA426).